The primary structure comprises 523 residues: DELLA protein RGL3 (523 aa).

Residues 1–28 (MKRSHQETSVEEEAPSMVEKLENGCGGG) form a disordered region. Residues 34 to 38 (DEFLA) carry the DELLA motif motif. Residues 56–60 (LEQLE) carry the LEXLE motif motif. A VHYNP motif motif is present at residues 78–82 (VHYNP). The GRAS domain maps to 148-516 (VLIEETGVRL…KPLIAASAWK (369 aa)). The segment at 155–209 (VRLVQALVACAEAVQLENLSLADALVKRVGLLAASQAGAMGKVATYFAEALARRI) is leucine repeat I (LRI). Positions 228–293 (QMNFYDSCPY…GGPPSFRLTG (66 aa)) are VHIID. A VHIID motif is present at residues 259–263 (VHVID). Positions 305-337 (ELGWKLAQLAQAIGVEFKFNGLTTERLSDLEPD) are leucine repeat II (LRII). Positions 348–437 (LVVNSVFELH…EVYLGRQILN (90 aa)) are PFYRE. The short motif at 356-360 (LHPVL) is the LXXLL motif element. The SAW stretch occupies residues 440 to 516 (ATEGSDRIER…KPLIAASAWK (77 aa)).

The protein belongs to the GRAS family. DELLA subfamily. As to quaternary structure, interacts directly with the GID2/SLY1 component of the SCF(GID2) complex, suggesting that it may be ubiquitinated. Interacts (via N-terminus) with GID1A, GID1B and GID1B (via N-terminus). Interacts with the BOI proteins BOI, BRG1, BRG2 and BRG3. In terms of processing, phosphorylated. May be ubiquitinated. In terms of tissue distribution, expressed at very low level. Mainly expressed in germinating seeds and flowers and siliques. Not expressed in other tissues.

It is found in the nucleus. In terms of biological role, probable transcriptional regulator that acts as a repressor of the gibberellin (GA) signaling pathway. No effect of the BOI proteins on its stability. Probably acts by participating in large multiprotein complexes that repress transcription of GA-inducible genes. Its activity may be regulated by phytohormones such as auxin and ethylene. The chain is DELLA protein RGL3 (RGL3) from Arabidopsis thaliana (Mouse-ear cress).